We begin with the raw amino-acid sequence, 196 residues long: Transcription repressor OFP10 (196 aa).

In terms of domain architecture, OVATE spans 100–159 (MAKESINPFEDYKKSMNQMIEERYIETESELKELLRCFLDINPSPQHNLIVRAFVDVCSH).

In terms of tissue distribution, expressed in roots, cauline leaves, shoots, stems, flower buds and siliques.

It is found in the nucleus. Its function is as follows. Transcriptional repressor that may regulate multiple aspects of plant growth and development through the regulation of BEL1-LIKE (BLH) and KNOX TALE (KNAT) homeodomain transcription factors. In Arabidopsis thaliana (Mouse-ear cress), this protein is Transcription repressor OFP10 (OFP10).